Reading from the N-terminus, the 360-residue chain is Protein Wnt-2 (360 aa).

An N-terminal signal peptide occupies residues 1–25; that stretch reads MNSPLRGIWLWLPLLLTWLTPEVSS. Cystine bridges form between Cys76/Cys87, Cys127/Cys135, Cys137/Cys157, Cys206/Cys220, Cys208/Cys215, Cys278/Cys309, Cys294/Cys304, Cys308/Cys348, Cys324/Cys339, Cys326/Cys336, and Cys331/Cys332. Ser212 carries the O-palmitoleoyl serine; by PORCN lipid modification. Asn295 carries N-linked (GlcNAc...) asparagine glycosylation.

The protein belongs to the Wnt family. Palmitoleoylation is required for efficient binding to frizzled receptors. Depalmitoleoylation leads to Wnt signaling pathway inhibition.

Its subcellular location is the secreted. The protein localises to the extracellular space. It localises to the extracellular matrix. In terms of biological role, ligand for members of the frizzled family of seven transmembrane receptors. Functions in the canonical Wnt signaling pathway that results in activation of transcription factors of the TCF/LEF family. Functions as a upstream regulator of FGF10 expression. Plays an important role in embryonic lung development. May contribute to embryonic brain development by regulating the proliferation of dopaminergic precursors and neurons. In Callithrix jacchus (White-tufted-ear marmoset), this protein is Protein Wnt-2 (WNT2).